Reading from the N-terminus, the 502-residue chain is Lanosterol 14-alpha demethylase (502 aa).

Residues 22-42 traverse the membrane as a helical segment; the sequence is GNLASMLLIACAFTLSLVYLF. Cysteine 448 is a heme binding site.

It belongs to the cytochrome P450 family. Heme serves as cofactor. In terms of processing, ubiquitinated by MARCHF6, leading to proteasomal degradation.

It localises to the endoplasmic reticulum membrane. Its subcellular location is the microsome membrane. The catalysed reaction is a 14alpha-methyl steroid + 3 reduced [NADPH--hemoprotein reductase] + 3 O2 = a Delta(14) steroid + formate + 3 oxidized [NADPH--hemoprotein reductase] + 4 H2O + 4 H(+). It catalyses the reaction lanosterol + 3 reduced [NADPH--hemoprotein reductase] + 3 O2 = 4,4-dimethyl-5alpha-cholesta-8,14,24-trien-3beta-ol + formate + 3 oxidized [NADPH--hemoprotein reductase] + 4 H2O + 4 H(+). It carries out the reaction 24,25-dihydrolanosterol + 3 reduced [NADPH--hemoprotein reductase] + 3 O2 = 4,4-dimethyl-8,14-cholestadien-3beta-ol + formate + 3 oxidized [NADPH--hemoprotein reductase] + 4 H2O + 4 H(+). The enzyme catalyses a 14alpha-methyl steroid + reduced [NADPH--hemoprotein reductase] + O2 = a 14alpha-hydroxymethyl steroid + oxidized [NADPH--hemoprotein reductase] + H2O + H(+). The catalysed reaction is a 14alpha-hydroxymethyl steroid + reduced [NADPH--hemoprotein reductase] + O2 = a 14alpha-formyl steroid + oxidized [NADPH--hemoprotein reductase] + 2 H2O + H(+). It catalyses the reaction a 14alpha-formyl steroid + reduced [NADPH--hemoprotein reductase] + O2 = a Delta(14) steroid + formate + oxidized [NADPH--hemoprotein reductase] + H2O + 2 H(+). It carries out the reaction lanosterol + reduced [NADPH--hemoprotein reductase] + O2 = 32-hydroxylanosterol + oxidized [NADPH--hemoprotein reductase] + H2O + H(+). The enzyme catalyses 32-hydroxylanosterol + reduced [NADPH--hemoprotein reductase] + O2 = 32-oxolanosterol + oxidized [NADPH--hemoprotein reductase] + 2 H2O + H(+). The catalysed reaction is 32-oxolanosterol + reduced [NADPH--hemoprotein reductase] + O2 = 4,4-dimethyl-5alpha-cholesta-8,14,24-trien-3beta-ol + formate + oxidized [NADPH--hemoprotein reductase] + H2O + 2 H(+). It catalyses the reaction 24,25-dihydrolanosterol + reduced [NADPH--hemoprotein reductase] + O2 = 32-hydroxy-24,25-dihydrolanosterol + oxidized [NADPH--hemoprotein reductase] + H2O + H(+). It carries out the reaction 32-hydroxy-24,25-dihydrolanosterol + reduced [NADPH--hemoprotein reductase] + O2 = 32-oxo-24,25-dihydrolanosterol + oxidized [NADPH--hemoprotein reductase] + 2 H2O + H(+). The enzyme catalyses 32-oxo-24,25-dihydrolanosterol + reduced [NADPH--hemoprotein reductase] + O2 = 4,4-dimethyl-8,14-cholestadien-3beta-ol + formate + oxidized [NADPH--hemoprotein reductase] + H2O + 2 H(+). The protein operates within steroid biosynthesis; zymosterol biosynthesis; zymosterol from lanosterol: step 1/6. With respect to regulation, inhibited by azalanstat. Inhibited by azole antifungal agents ketoconazole, itraconazole and fluconazole. In terms of biological role, sterol 14alpha-demethylase that plays a critical role in the cholesterol biosynthesis pathway, being cholesterol the major sterol component in mammalian membranes as well as a precursor for bile acid and steroid hormone synthesis. Cytochrome P450 monooxygenase that catalyzes the three-step oxidative removal of the 14alpha-methyl group (C-32) of sterols such as lanosterol (lanosta-8,24-dien-3beta-ol) and 24,25-dihydrolanosterol (DHL) in the form of formate, and converts the sterols to 4,4-dimethyl-5alpha-cholesta-8,14,24-trien-3beta-ol and 4,4-dimethyl-8,14-cholestadien-3beta-ol, respectively, which are intermediates of cholesterol biosynthesis. Can also demethylate substrates not intrinsic to mammals, such as eburicol (24-methylene-24,25-dihydrolanosterol), but at a lower rate than DHL. This chain is Lanosterol 14-alpha demethylase, found in Bos taurus (Bovine).